A 163-amino-acid chain; its full sequence is uncharacterized protein (163 aa).

As to expression, expressed in keratinocytes.

This is an uncharacterized protein from Homo sapiens (Human).